A 168-amino-acid polypeptide reads, in one-letter code: MAVKIKLQRLGKIRTPHYRVVVADARTKRDGKVIENIGIYEPKQDPSVIKIDSERAQYWLSVGAQPTESVAALLKVTGDWQKFKGIEGAEGTLRVAEEKPSKLDLFNQALSEANNGPTAEAITEKKKKAREEKEAKEAAEKAAAEKAAAAEAEASEEAPAEEAASEEA.

Positions 110-168 (LSEANNGPTAEAITEKKKKAREEKEAKEAAEKAAAEKAAAAEAEASEEAPAEEAASEEA) are disordered. Over residues 129–144 (AREEKEAKEAAEKAAA) the composition is skewed to basic and acidic residues. The segment covering 153 to 168 (EASEEAPAEEAASEEA) has biased composition (acidic residues).

The protein belongs to the bacterial ribosomal protein bS16 family.

The polypeptide is Small ribosomal subunit protein bS16 (Corynebacterium efficiens (strain DSM 44549 / YS-314 / AJ 12310 / JCM 11189 / NBRC 100395)).